The primary structure comprises 199 residues: Probable GTP-binding protein EngB (199 aa).

Positions 28–199 constitute an EngB-type G domain; the sequence is DLPEIALAGR…DSWDAILEQV (172 aa). Residues 36–43, 63–67, 81–84, 148–151, and 180–182 each bind GTP; these read GRSNVGKS, GKTQL, DVPG, TKAD, and FSS. The Mg(2+) site is built by Ser-43 and Thr-65.

The protein belongs to the TRAFAC class TrmE-Era-EngA-EngB-Septin-like GTPase superfamily. EngB GTPase family. The cofactor is Mg(2+).

Necessary for normal cell division and for the maintenance of normal septation. This is Probable GTP-binding protein EngB from Streptococcus pyogenes serotype M6 (strain ATCC BAA-946 / MGAS10394).